The primary structure comprises 399 residues: Argininosuccinate synthase (399 aa).

Position 8 to 16 (8 to 16) interacts with ATP; the sequence is AYSGGLDTT. Tyrosine 87 contributes to the L-citrulline binding site. Glycine 117 lines the ATP pocket. The L-aspartate site is built by threonine 119, asparagine 123, and aspartate 124. Asparagine 123 provides a ligand contact to L-citrulline. Positions 127, 175, 259, and 271 each coordinate L-citrulline.

It belongs to the argininosuccinate synthase family. Type 1 subfamily. As to quaternary structure, homotetramer.

It localises to the cytoplasm. It carries out the reaction L-citrulline + L-aspartate + ATP = 2-(N(omega)-L-arginino)succinate + AMP + diphosphate + H(+). The protein operates within amino-acid biosynthesis; L-arginine biosynthesis; L-arginine from L-ornithine and carbamoyl phosphate: step 2/3. The protein is Argininosuccinate synthase of Corynebacterium urealyticum (strain ATCC 43042 / DSM 7109).